A 209-amino-acid chain; its full sequence is Dof zinc finger protein DOF1.6 (209 aa).

The span at 1-17 shows a compositional bias: polar residues; sequence MPSEPNQTRPTRVQPST. Residues 1–29 form a disordered region; sequence MPSEPNQTRPTRVQPSTAAYPPPNLAEPL. Residues 20 to 29 show a composition bias toward pro residues; that stretch reads YPPPNLAEPL. A Dof-type zinc finger spans residues 29 to 83; the sequence is LPCPRCNSTTTKFCYYNNYNLAQPRYYCKSCRRYWTQGGTLRDVPVGGGTRRSSS. Zn(2+) is bound by residues C31, C34, C56, and C59. A disordered region spans residues 70 to 116; it reads RDVPVGGGTRRSSSKRHRSFSTTATSSSSSSSVITTTTQEPATTEAS. Residues 89 to 116 are compositionally biased toward low complexity; that stretch reads FSTTATSSSSSSSVITTTTQEPATTEAS.

Its subcellular location is the nucleus. Transcription factor that binds specifically to a 5'-AA[AG]G-3' consensus core sequence. The sequence is that of Dof zinc finger protein DOF1.6 (DOF1.6) from Arabidopsis thaliana (Mouse-ear cress).